The primary structure comprises 427 residues: Glutamate-1-semialdehyde 2,1-aminomutase (427 aa).

Lysine 265 is modified (N6-(pyridoxal phosphate)lysine).

The protein belongs to the class-III pyridoxal-phosphate-dependent aminotransferase family. HemL subfamily. In terms of assembly, homodimer. Requires pyridoxal 5'-phosphate as cofactor.

The protein resides in the cytoplasm. It carries out the reaction (S)-4-amino-5-oxopentanoate = 5-aminolevulinate. Its pathway is porphyrin-containing compound metabolism; protoporphyrin-IX biosynthesis; 5-aminolevulinate from L-glutamyl-tRNA(Glu): step 2/2. This Shewanella amazonensis (strain ATCC BAA-1098 / SB2B) protein is Glutamate-1-semialdehyde 2,1-aminomutase.